The chain runs to 310 residues: Olfactory receptor 5P55 (310 aa).

Residues 1–25 are Extracellular-facing; that stretch reads METQNHTTVTEFILLGLTESSTLRV. A glycan (N-linked (GlcNAc...) asparagine) is linked at N5. The chain crosses the membrane as a helical span at residues 26–46; it reads ILFMVFLGIYTVTLVGNFSII. Residues 47-54 are Cytoplasmic-facing; that stretch reads SLIRSCPQ. The helical transmembrane segment at 55–75 threads the bilayer; sequence LHTPMYLFLSHLAFVDIGFST. Residues 76–99 are Extracellular-facing; sequence SITPTMFKGFLGNRLVLSVAACIA. An intrachain disulfide couples C97 to C189. The helical transmembrane segment at 100–120 threads the bilayer; that stretch reads QFCITVTFGTVECFLLAVMAY. At 121 to 133 the chain is on the cytoplasmic side; sequence DRYVAICSPLLYS. A helical transmembrane segment spans residues 134 to 154; sequence THMSPRICFLLVGASYVGGCV. Topologically, residues 155-196 are extracellular; it reads NSGAFTSCLSILSFCGPNQIDHFFCDFPAVLKLSCSDVSIIG. A helical membrane pass occupies residues 197–217; that stretch reads IIPSISAGSIIVITVFVIAVS. At 218 to 237 the chain is on the cytoplasmic side; that stretch reads YAYILITILKMRSTEGRQKA. The chain crosses the membrane as a helical span at residues 238–258; the sequence is FSTCTSHLTAVTLYYGTITFI. Over 259–271 the chain is Extracellular; sequence YVMPKSNYSTAQN. N265 carries an N-linked (GlcNAc...) asparagine glycan. The chain crosses the membrane as a helical span at residues 272-292; sequence KILSVFYTVVIPMLNPLIYSL. Topologically, residues 293–310 are cytoplasmic; sequence RNRDVKEALRKAIIRIFP.

The protein belongs to the G-protein coupled receptor 1 family.

The protein localises to the cell membrane. Potential odorant receptor. The chain is Olfactory receptor 5P55 from Mus musculus (Mouse).